The chain runs to 25 residues: Omega-conotoxin MVIIB (25 aa).

Cystine bridges form between C1-C16, C8-C20, and C15-C25. C25 carries the post-translational modification Cysteine amide.

The protein belongs to the conotoxin O1 superfamily. In terms of tissue distribution, expressed by the venom duct.

Its subcellular location is the secreted. Its function is as follows. Omega-conotoxins act at presynaptic membranes, they bind and block voltage-gated calcium channels (Cav). The chain is Omega-conotoxin MVIIB from Conus magus (Magical cone).